The sequence spans 142 residues: Large ribosomal subunit protein uL13 (142 aa).

The protein belongs to the universal ribosomal protein uL13 family. Part of the 50S ribosomal subunit.

In terms of biological role, this protein is one of the early assembly proteins of the 50S ribosomal subunit, although it is not seen to bind rRNA by itself. It is important during the early stages of 50S assembly. The polypeptide is Large ribosomal subunit protein uL13 (Pseudomonas putida (strain ATCC 700007 / DSM 6899 / JCM 31910 / BCRC 17059 / LMG 24140 / F1)).